A 503-amino-acid chain; its full sequence is AMP phosphorylase (503 aa).

AMP is bound by residues Gly168, Ser194–Ser199, and Thr203. Catalysis depends on Asp256, which acts as the Proton donor. Residues Ser264 and Lys288 each contribute to the AMP site.

Belongs to the thymidine/pyrimidine-nucleoside phosphorylase family. Type 2 subfamily.

It carries out the reaction AMP + phosphate = alpha-D-ribose 1,5-bisphosphate + adenine. It catalyses the reaction CMP + phosphate = cytosine + alpha-D-ribose 1,5-bisphosphate. The enzyme catalyses UMP + phosphate = alpha-D-ribose 1,5-bisphosphate + uracil. Functionally, catalyzes the conversion of AMP and phosphate to adenine and ribose 1,5-bisphosphate (R15P). Exhibits phosphorylase activity toward CMP and UMP in addition to AMP. Functions in an archaeal AMP degradation pathway, together with R15P isomerase and RubisCO. This chain is AMP phosphorylase, found in Pyrococcus horikoshii (strain ATCC 700860 / DSM 12428 / JCM 9974 / NBRC 100139 / OT-3).